A 301-amino-acid chain; its full sequence is Hydroxymycolate synthase MmaA4 (301 aa).

S-adenosyl-L-methionine-binding positions include 42-43 (YS), 81-83 (GCG), 103-108 (TLSKNQ), 132-133 (WE), and Ile-145. Cys-278 is an active-site residue.

This sequence belongs to the CFA/CMAS family. As to quaternary structure, monomer.

It functions in the pathway lipid metabolism; mycolic acid biosynthesis. Its function is as follows. Involved in the biosynthesis of hydroxymycolate, a common precursor of oxygenated mycolic acids (methoxymycolate and ketomycolate). Probably transfers a methyl group from the S-adenosylmethionine (SAM) cofactor and, subsequently or simultaneously, a water molecule onto the double bound of ethylene substrates, leading to the formation of the hydroxylated product at the distal position. The chain is Hydroxymycolate synthase MmaA4 (cmaA) from Mycobacterium bovis (strain ATCC BAA-935 / AF2122/97).